The following is a 65-amino-acid chain: Large ribosomal subunit protein bL35 (65 aa).

The protein belongs to the bacterial ribosomal protein bL35 family.

In Clostridium botulinum (strain Loch Maree / Type A3), this protein is Large ribosomal subunit protein bL35.